The primary structure comprises 639 residues: Threonine--tRNA ligase (639 aa).

Residues 1 to 62 form the TGS domain; that stretch reads MYQLTLPDKS…ETDANIEVLT (62 aa). Positions 246–537 are catalytic; that stretch reads DHRKIGKELD…LIEHYEGKFP (292 aa). Zn(2+) contacts are provided by cysteine 337, histidine 388, and histidine 514.

Belongs to the class-II aminoacyl-tRNA synthetase family. Homodimer. The cofactor is Zn(2+).

Its subcellular location is the cytoplasm. It carries out the reaction tRNA(Thr) + L-threonine + ATP = L-threonyl-tRNA(Thr) + AMP + diphosphate + H(+). In terms of biological role, catalyzes the attachment of threonine to tRNA(Thr) in a two-step reaction: L-threonine is first activated by ATP to form Thr-AMP and then transferred to the acceptor end of tRNA(Thr). Also edits incorrectly charged L-seryl-tRNA(Thr). This is Threonine--tRNA ligase from Leptospira borgpetersenii serovar Hardjo-bovis (strain JB197).